Reading from the N-terminus, the 100-residue chain is MELTPREKDKLLIFTAGLLAERRKARGLKLNYPEAVAFITCAILEGARDGRSVAELMSYGATLLSREDVMDGIAEMIPEIQVEATFPDGTKLVTVHNPIV.

It belongs to the urease gamma subunit family. Heterotrimer of UreA (gamma), UreB (beta) and UreC (alpha) subunits. Three heterotrimers associate to form the active enzyme.

Its subcellular location is the cytoplasm. It catalyses the reaction urea + 2 H2O + H(+) = hydrogencarbonate + 2 NH4(+). It functions in the pathway nitrogen metabolism; urea degradation; CO(2) and NH(3) from urea (urease route): step 1/1. The sequence is that of Urease subunit gamma from Azoarcus sp. (strain BH72).